We begin with the raw amino-acid sequence, 154 residues long: 6,7-dimethyl-8-ribityllumazine synthase (154 aa).

5-amino-6-(D-ribitylamino)uracil contacts are provided by residues 22 to 23, 56 to 58, and 80 to 82; these read FN, AFE, and TVI. 85 to 86 is a binding site for (2S)-2-hydroxy-3-oxobutyl phosphate; sequence AT. Histidine 88 serves as the catalytic Proton donor. Phenylalanine 113 is a 5-amino-6-(D-ribitylamino)uracil binding site. Arginine 127 is a (2S)-2-hydroxy-3-oxobutyl phosphate binding site.

This sequence belongs to the DMRL synthase family. In terms of assembly, forms an icosahedral capsid composed of 60 subunits, arranged as a dodecamer of pentamers. Can interact with riboflavin synthase, forming a lumazine synthase/riboflavin synthase complex, also designated as 'heavy riboflavin synthase complex', which consists of a trimer of riboflavin synthase enclosed within the icosahedral structure composed of 60 subunits of 6,7-dimethyl-8-ribityllumazine synthase.

It carries out the reaction (2S)-2-hydroxy-3-oxobutyl phosphate + 5-amino-6-(D-ribitylamino)uracil = 6,7-dimethyl-8-(1-D-ribityl)lumazine + phosphate + 2 H2O + H(+). It functions in the pathway cofactor biosynthesis; riboflavin biosynthesis; riboflavin from 2-hydroxy-3-oxobutyl phosphate and 5-amino-6-(D-ribitylamino)uracil: step 1/2. Functionally, catalyzes the formation of 6,7-dimethyl-8-ribityllumazine by condensation of 5-amino-6-(D-ribitylamino)uracil with 3,4-dihydroxy-2-butanone 4-phosphate. This is the penultimate step in the biosynthesis of riboflavin. Is able to use the non-natural R enantiomer of 3,4-dihydroxy-2-butanone 4-phosphate as a substrate, but with less efficiency than the natural S enantiomer. Cannot use unphosphorylated 3,4-dihydroxy-2-butanone, 3,4-dihydroxy-2-butanone 3-phosphate or diacetyl as substrates. The sequence is that of 6,7-dimethyl-8-ribityllumazine synthase (ribH) from Bacillus subtilis (strain 168).